Here is a 172-residue protein sequence, read N- to C-terminus: Type IV secretion system putative outer membrane lipoprotein BRA0058/BS1330_II0058 (172 aa).

A signal peptide spans 1-15 (MRTLVMVACAVSLAA). Residue cysteine 16 is the site of N-palmitoyl cysteine attachment. A lipid anchor (S-diacylglycerol cysteine) is attached at cysteine 16. The region spanning 58–172 (WPARPPKQTV…RRVDIEILRK (115 aa)) is the OmpA-like domain.

Its subcellular location is the cell outer membrane. Its function is as follows. The VirB system could be required for the establishment of the replication niche in the host. The protein is Type IV secretion system putative outer membrane lipoprotein BRA0058/BS1330_II0058 of Brucella suis biovar 1 (strain 1330).